The chain runs to 356 residues: 11-beta-hydroxysteroid dehydrogenase (356 aa).

The chain crosses the membrane as a helical; Signal-anchor for type II membrane protein span at residues 10–30; sequence LVVPPAGLLMLAFAWPSLAFF. Residues 13–26 carry the Proline-knob motif; it reads PPAGLLMLAFAWPS. NADP(+) is bound at residue 54–85; the sequence is GASSGIGEQIAYQYAKRRANLVLVARREHRLR. Serine 184 is a substrate binding site. Tyrosine 197 functions as the Proton acceptor in the catalytic mechanism. NADP(+) contacts are provided by residues 197–201 and lysine 201; that span reads YNAAK.

The protein belongs to the short-chain dehydrogenases/reductases (SDR) family. As to expression, expressed in megagametophytes (at protein level).

Its subcellular location is the lipid droplet. It localises to the membrane. It catalyses the reaction an 11beta-hydroxysteroid + NADP(+) = an 11-oxosteroid + NADPH + H(+). It carries out the reaction corticosterone + NADP(+) = 11-dehydrocorticosterone + NADPH + H(+). The catalysed reaction is 17beta-estradiol + NADP(+) = estrone + NADPH + H(+). Its function is as follows. Has dehydrogenase activity against corticosterone (11 beta-hydroxysteroid) and estradiol (17 beta-hydroxysteroid) in the presence of NADP(+). May be involved in signal transduction regulated by various sterols. The polypeptide is 11-beta-hydroxysteroid dehydrogenase (Pinus massoniana (Chinese red pine)).